The chain runs to 537 residues: MGIISTILGVIGFGFGTTIGIVIGYYLFIYFQSTDVEDPEIKPLVELDSETIATMFPEIPMWVKNPDFDRIDWLNKLIGHMWPYMDKAICKMAKSIAKPIIAEQIPNYKIDSVEFEMLTLGSLPPSFQGMKVYATDDKEIIMELSVKWAGNPNIIVVAKAFGLKATVQVIDLQVYATPRITLKPLVPSFPCFANIFVSLMDKPQVDFGLKLLGADVMAIPGLYRFVQEIIKDQVANMYLWPKTLNVQIMDPSKAMKKPVGLLSVKVIKAIKLKKKDLLGGSDPYVKLTLSGDKVPGKKTVVKHSNLNPEWNEEFDLVVKEPESQELQLIVYDWEQVGKHDKIGMNVIQLKDLTPEEPKLMTLELLKSMEPKEPVSEKSRGQLVVEVEYKPFKDDDIPENIDDPNAVEKAPEGTPSTGGLLVVIVHEAEDLEGKYHTNPSVRLLFRGEERKTKRVKKNREPRWDEDFQFPLDEPPINDKLHVEVISSSSRLIHPKETLGYVVINLGDVVSNRRINDKYHLIDSKNGRIQIELQWRNSS.

The Cytoplasmic portion of the chain corresponds to 1–2 (MG). Residues 3 to 23 (IISTILGVIGFGFGTTIGIVI) traverse the membrane as a helical segment. Over 24–537 (GYYLFIYFQS…QIELQWRNSS (514 aa)) the chain is Lumenal. One can recognise an SMP-LTD domain in the interval 67–249 (DFDRIDWLNK…WPKTLNVQIM (183 aa)). The tract at residues 227–505 (QEIIKDQVAN…TLGYVVINLG (279 aa)) is phospholipid binding. 2 consecutive C2 domains span residues 240–362 (WPKT…LMTL) and 402–517 (DPNA…NDKY). 4 residues coordinate Ca(2+): D276, D282, D332, and E334.

This sequence belongs to the synaptotagmin family. Requires Ca(2+) as cofactor.

It localises to the golgi apparatus membrane. Its function is as follows. May play an important role in regulating an unconventional protein trafficking from the cytosol to the extracellular matrix. The protein is Synaptotagmin-2 (SYT2) of Arabidopsis thaliana (Mouse-ear cress).